A 255-amino-acid polypeptide reads, in one-letter code: NAD-dependent protein deacylase (255 aa).

The Deacetylase sirtuin-type domain maps to methionine 1 to lysine 253. Glycine 20–tryptophan 39 contributes to the NAD(+) binding site. Tyrosine 64 and arginine 67 together coordinate substrate. Residue glutamine 98–aspartate 101 participates in NAD(+) binding. The active-site Proton acceptor is the histidine 116. Positions 124, 127, 151, and 154 each coordinate Zn(2+). Residues glycine 191–serine 193, asparagine 217–lysine 219, and alanine 235 each bind NAD(+).

This sequence belongs to the sirtuin family. Class III subfamily. Zn(2+) serves as cofactor.

It is found in the cytoplasm. It catalyses the reaction N(6)-acetyl-L-lysyl-[protein] + NAD(+) + H2O = 2''-O-acetyl-ADP-D-ribose + nicotinamide + L-lysyl-[protein]. It carries out the reaction N(6)-succinyl-L-lysyl-[protein] + NAD(+) + H2O = 2''-O-succinyl-ADP-D-ribose + nicotinamide + L-lysyl-[protein]. In terms of biological role, NAD-dependent lysine deacetylase and desuccinylase that specifically removes acetyl and succinyl groups on target proteins. Modulates the activities of several proteins which are inactive in their acylated form. Deacetylates the N-terminal lysine residue of Alba, the major archaeal chromatin protein and that, in turn, increases Alba's DNA binding affinity, thereby repressing transcription. This chain is NAD-dependent protein deacylase, found in Thermococcus sibiricus (strain DSM 12597 / MM 739).